The primary structure comprises 189 residues: Chitin synthase 2 (189 aa).

This sequence belongs to the chitin synthase family. Class II subfamily.

The protein localises to the cell membrane. The enzyme catalyses [(1-&gt;4)-N-acetyl-beta-D-glucosaminyl](n) + UDP-N-acetyl-alpha-D-glucosamine = [(1-&gt;4)-N-acetyl-beta-D-glucosaminyl](n+1) + UDP + H(+). In terms of biological role, polymerizes chitin, a structural polymer of the cell wall and septum, by transferring the sugar moiety of UDP-GlcNAc to the non-reducing end of the growing chitin polymer. The polypeptide is Chitin synthase 2 (CHS2) (Ajellomyces dermatitidis (Blastomyces dermatitidis)).